A 100-amino-acid polypeptide reads, in one-letter code: MKVTDVRLRKIQTDGRMKALVSITLDEAFVIHDLRVIEGNSGLFVAMPSKRTPDGEFRDIAHPINSDMRQEIQDAVMKVYDEIDEVVPDKNATSEDSEEA.

This sequence belongs to the SpoVG family.

In terms of biological role, could be involved in septation. This chain is Putative septation protein SpoVG, found in Staphylococcus aureus (strain MRSA252).